A 196-amino-acid chain; its full sequence is UPF0215 protein MM_1007 (196 aa).

This sequence belongs to the UPF0215 family.

This Methanosarcina mazei (strain ATCC BAA-159 / DSM 3647 / Goe1 / Go1 / JCM 11833 / OCM 88) (Methanosarcina frisia) protein is UPF0215 protein MM_1007.